A 660-amino-acid polypeptide reads, in one-letter code: MKTVVFAYHDMGCLGIEALLSAGYEISAIFTHTDNPGEKAFYGSVARLAAERGIPVYAPDNVNHPLWMERIAQLSPEVIFSFYYRHLICDEILQLAPRGAFNLHGSLLPKYRGRAPLNWVLVNGETETGVTLHRMVKRADAGAIVAQLRVAIAPDDIAITLHHKLCHAARQLLEQTLPAIKHGNILEIAQRENEATCFGRRTPDDSFLEWHKPASVLHNMVRAVADPWPGAFSYVGNQKFTVWSSRVHPHASKAQPGSVISVAPLLIACGDGALEIVTGQAGDGITMQGSQLAQTLGLVQGSRLNSQPACAARRRTRVLILGVNGFIGNHLTERLLREDHYEVYGLDIGSDAISRFMNHPHFHFVEGDISIHSEWIEYHVKKCDVVLPLVAIATPIEYTRNPLRVFELDFEENLRIIRYCVKYRKRIIFPSTSEVYGMCSDKYFDEDHSNLIVGPVNKPRWIYSVSKQLLDRVIWAYGEKEGLQFTLFRPFNWMGPRLDNLNAARIGSSRAITQLILNLVEGSPIKLIDGGKQKRCFTDIRDGIEALYRIIENAGNRCDGEIINIGNPENEASIEELGEMLLASFEKHPLRHYFPPFAGFRVVESSSYYGKGYQDVEHRKPSIRNARRCLNWEPKIDMQETIDETLDFFLRTVDLTDKPS.

The segment at 1-304 (MKTVVFAYHD…TLGLVQGSRL (304 aa)) is formyltransferase ArnAFT. 86–88 (HLI) contributes to the (6R)-10-formyltetrahydrofolate binding site. Residue His104 is the Proton donor; for formyltransferase activity of the active site. Residues Arg114 and 136–140 (VKRAD) contribute to the (6R)-10-formyltetrahydrofolate site. A dehydrogenase ArnADH region spans residues 314 to 660 (RRTRVLILGV…RTVDLTDKPS (347 aa)). NAD(+) contacts are provided by residues Asp347 and 368-369 (DI). UDP-alpha-D-glucuronate is bound by residues Ala393, Tyr398, and 432–433 (TS). The active-site Proton acceptor; for decarboxylase activity is the Glu434. Residues Arg460, Asn492, 526 to 535 (KLIDGGKQKR), and Tyr613 contribute to the UDP-alpha-D-glucuronate site. Arg619 functions as the Proton donor; for decarboxylase activity in the catalytic mechanism.

It in the N-terminal section; belongs to the Fmt family. UDP-L-Ara4N formyltransferase subfamily. This sequence in the C-terminal section; belongs to the NAD(P)-dependent epimerase/dehydratase family. UDP-glucuronic acid decarboxylase subfamily. In terms of assembly, homohexamer, formed by a dimer of trimers.

It catalyses the reaction UDP-alpha-D-glucuronate + NAD(+) = UDP-beta-L-threo-pentopyranos-4-ulose + CO2 + NADH. It carries out the reaction UDP-4-amino-4-deoxy-beta-L-arabinose + (6R)-10-formyltetrahydrofolate = UDP-4-deoxy-4-formamido-beta-L-arabinose + (6S)-5,6,7,8-tetrahydrofolate + H(+). It functions in the pathway nucleotide-sugar biosynthesis; UDP-4-deoxy-4-formamido-beta-L-arabinose biosynthesis; UDP-4-deoxy-4-formamido-beta-L-arabinose from UDP-alpha-D-glucuronate: step 1/3. The protein operates within nucleotide-sugar biosynthesis; UDP-4-deoxy-4-formamido-beta-L-arabinose biosynthesis; UDP-4-deoxy-4-formamido-beta-L-arabinose from UDP-alpha-D-glucuronate: step 3/3. It participates in bacterial outer membrane biogenesis; lipopolysaccharide biosynthesis. In terms of biological role, bifunctional enzyme that catalyzes the oxidative decarboxylation of UDP-glucuronic acid (UDP-GlcUA) to UDP-4-keto-arabinose (UDP-Ara4O) and the addition of a formyl group to UDP-4-amino-4-deoxy-L-arabinose (UDP-L-Ara4N) to form UDP-L-4-formamido-arabinose (UDP-L-Ara4FN). The modified arabinose is attached to lipid A and is required for resistance to polymyxin and cationic antimicrobial peptides. The protein is Bifunctional polymyxin resistance protein ArnA of Escherichia coli O81 (strain ED1a).